The sequence spans 354 residues: DNA polymerase IV (354 aa).

The UmuC domain occupies 6-187; sequence IIHVDCDCFY…LPVARLHGVG (182 aa). Residues Asp-10 and Asp-105 each contribute to the Mg(2+) site. The active site involves Glu-106.

Belongs to the DNA polymerase type-Y family. In terms of assembly, monomer. Mg(2+) is required as a cofactor.

It is found in the cytoplasm. The catalysed reaction is DNA(n) + a 2'-deoxyribonucleoside 5'-triphosphate = DNA(n+1) + diphosphate. Poorly processive, error-prone DNA polymerase involved in untargeted mutagenesis. Copies undamaged DNA at stalled replication forks, which arise in vivo from mismatched or misaligned primer ends. These misaligned primers can be extended by PolIV. Exhibits no 3'-5' exonuclease (proofreading) activity. May be involved in translesional synthesis, in conjunction with the beta clamp from PolIII. The sequence is that of DNA polymerase IV from Pseudomonas putida (strain GB-1).